Consider the following 489-residue polypeptide: N-succinylglutamate 5-semialdehyde dehydrogenase (489 aa).

223-228 (GSSRTG) serves as a coordination point for NAD(+). Residues Glu-246 and Cys-280 contribute to the active site.

It belongs to the aldehyde dehydrogenase family. AstD subfamily.

It catalyses the reaction N-succinyl-L-glutamate 5-semialdehyde + NAD(+) + H2O = N-succinyl-L-glutamate + NADH + 2 H(+). Its pathway is amino-acid degradation; L-arginine degradation via AST pathway; L-glutamate and succinate from L-arginine: step 4/5. Catalyzes the NAD-dependent reduction of succinylglutamate semialdehyde into succinylglutamate. The polypeptide is N-succinylglutamate 5-semialdehyde dehydrogenase (Aeromonas hydrophila subsp. hydrophila (strain ATCC 7966 / DSM 30187 / BCRC 13018 / CCUG 14551 / JCM 1027 / KCTC 2358 / NCIMB 9240 / NCTC 8049)).